A 441-amino-acid chain; its full sequence is Histidinol dehydrogenase (441 aa).

3 residues coordinate substrate: T240, Q262, and H265. 2 residues coordinate Zn(2+): Q262 and H265. Residues E332 and H333 each act as proton acceptor in the active site. Residues H333, D366, E420, and H425 each coordinate substrate. D366 is a Zn(2+) binding site. Residue H425 coordinates Zn(2+).

It belongs to the histidinol dehydrogenase family. It depends on Zn(2+) as a cofactor.

It carries out the reaction L-histidinol + 2 NAD(+) + H2O = L-histidine + 2 NADH + 3 H(+). Its pathway is amino-acid biosynthesis; L-histidine biosynthesis; L-histidine from 5-phospho-alpha-D-ribose 1-diphosphate: step 9/9. Its function is as follows. Catalyzes the sequential NAD-dependent oxidations of L-histidinol to L-histidinaldehyde and then to L-histidine. This chain is Histidinol dehydrogenase, found in Streptomyces avermitilis (strain ATCC 31267 / DSM 46492 / JCM 5070 / NBRC 14893 / NCIMB 12804 / NRRL 8165 / MA-4680).